The chain runs to 1031 residues: Kinesin heavy chain (1031 aa).

Residues 8 to 325 (NIKVVCRVRP…LMFGQRAKTI (318 aa)) enclose the Kinesin motor domain. Position 84-91 (84-91 (GQTSSGKT)) interacts with ATP. The stretch at 393–857 (PKQMTVHVSE…RDNADLRCEL (465 aa)) forms a coiled coil. Residues 673-686 (TDQEDKKREEEDKM) are compositionally biased toward basic and acidic residues. Disordered stretches follow at residues 673 to 692 (TDQE…ATEM) and 906 to 1031 (RNFA…EQGS). The segment at 858-1031 (PKLERRLRAT…PLTTSGEQGS (174 aa)) is globular. The segment covering 932-949 (GSTGIRGGGYSGIRGGGS) has biased composition (gly residues). 2 stretches are compositionally biased toward polar residues: residues 964–977 (SHNN…NPND) and 1014–1031 (RNNT…EQGS).

This sequence belongs to the TRAFAC class myosin-kinesin ATPase superfamily. Kinesin family. Kinesin subfamily. In terms of assembly, oligomer composed of two heavy chains and two light chains.

It is found in the cytoplasm. The protein resides in the cytoskeleton. In terms of biological role, kinesin is a microtubule-associated force-producing protein that may play a role in organelle transport. This Strongylocentrotus purpuratus (Purple sea urchin) protein is Kinesin heavy chain.